Reading from the N-terminus, the 231-residue chain is NADH-ubiquinone oxidoreductase chain 4 (231 aa).

A run of 6 helical transmembrane segments spans residues 1-21 (PIAGSMVLAAILLKLGGYGII), 34-54 (MFLPFLVLALWGAILANLTCL), 63-85 (IAYSSISHMGLVVAAIIIQTPWG), 89-111 (AMALMIAHGFTSSALFCLANTTY), 118-138 (ILILTRGFHNILPMATTWWLL), and 169-189 (TIILLGMSMLITASYSLHMFL).

The protein belongs to the complex I subunit 4 family.

The protein localises to the mitochondrion membrane. It carries out the reaction a ubiquinone + NADH + 5 H(+)(in) = a ubiquinol + NAD(+) + 4 H(+)(out). Its function is as follows. Core subunit of the mitochondrial membrane respiratory chain NADH dehydrogenase (Complex I) that is believed to belong to the minimal assembly required for catalysis. Complex I functions in the transfer of electrons from NADH to the respiratory chain. The immediate electron acceptor for the enzyme is believed to be ubiquinone. In Trimeresurus cantori (Cantor's pit viper), this protein is NADH-ubiquinone oxidoreductase chain 4 (MT-ND4).